The following is a 252-amino-acid chain: N-glycosylase/DNA lyase (252 aa).

The 8-oxoguanine site is built by glutamine 32, serine 60, and tryptophan 71. The tract at residues 129 to 193 (KTYYSDMEKL…KDSRIEKYTL (65 aa)) is helix-hairpin-helix. The active-site Schiff-base intermediate with DNA is the lysine 153. Residues phenylalanine 157 and proline 183 each coordinate 8-oxoguanine. Aspartate 185 is an active-site residue. Residues aspartate 219 and tryptophan 223 each contribute to the 8-oxoguanine site.

This sequence belongs to the archaeal N-glycosylase/DNA lyase (AGOG) family.

The enzyme catalyses 2'-deoxyribonucleotide-(2'-deoxyribose 5'-phosphate)-2'-deoxyribonucleotide-DNA = a 3'-end 2'-deoxyribonucleotide-(2,3-dehydro-2,3-deoxyribose 5'-phosphate)-DNA + a 5'-end 5'-phospho-2'-deoxyribonucleoside-DNA + H(+). Its function is as follows. DNA repair enzyme that is part of the base excision repair (BER) pathway; protects from oxidative damage by removing the major product of DNA oxidation, 8-oxoguanine (GO), from single- and double-stranded DNA substrates. This Methanococcus maripaludis (strain DSM 14266 / JCM 13030 / NBRC 101832 / S2 / LL) protein is N-glycosylase/DNA lyase.